Consider the following 75-residue polypeptide: Protease B inhibitor 2 (75 aa).

A Phosphothreonine modification is found at Thr74.

This sequence belongs to the protease inhibitor I9 family. In terms of assembly, part of the heterodimeric LMA1 complex together with the thioredoxin II/TRX2. LMA1 binds to the ATPase SEC18.

It is found in the cytoplasm. Cytosolic inhibitor of vacuolar proteinase B (yscB), probably regulating protease B activity during limited proteolysis. PBI2 is a component of the LMA1 complex, which is involved in the facilitation of vesicle fusion such as homotypic vacuole and ER-derived COPII vesicle fusion with the Golgi. The polypeptide is Protease B inhibitor 2 (PBI2) (Saccharomyces cerevisiae (strain ATCC 204508 / S288c) (Baker's yeast)).